Here is a 458-residue protein sequence, read N- to C-terminus: Exodeoxyribonuclease 7 large subunit (458 aa).

This sequence belongs to the XseA family. Heterooligomer composed of large and small subunits.

It is found in the cytoplasm. It carries out the reaction Exonucleolytic cleavage in either 5'- to 3'- or 3'- to 5'-direction to yield nucleoside 5'-phosphates.. Bidirectionally degrades single-stranded DNA into large acid-insoluble oligonucleotides, which are then degraded further into small acid-soluble oligonucleotides. The sequence is that of Exodeoxyribonuclease 7 large subunit from Geobacter sp. (strain M21).